A 164-amino-acid chain; its full sequence is PTS system sorbose-specific EIIB component (164 aa).

Residues 1–164 (MQITLARIDD…DKINETAFCE (164 aa)) enclose the PTS EIIB type-4 domain. Residue His14 is the Pros-phosphohistidine intermediate of the active site. Position 14 is a phosphohistidine; by EIIA (His14).

As to quaternary structure, dimer of dimers.

Its subcellular location is the cytoplasm. It carries out the reaction keto-L-sorbose(out) + N(pros)-phospho-L-histidyl-[protein] = L-sorbose 1-phosphate(in) + L-histidyl-[protein]. The phosphoenolpyruvate-dependent sugar phosphotransferase system (PTS), a major carbohydrate active transport system, catalyzes the phosphorylation of incoming sugar substrates concomitant with their translocation across the cell membrane. The enzyme II SorABFM PTS system is involved in L-sorbose transport. The protein is PTS system sorbose-specific EIIB component of Klebsiella pneumoniae.